Consider the following 247-residue polypeptide: Lys-63-specific deubiquitinase BRCC36 (247 aa).

An N-acetylalanine modification is found at alanine 2. Residues 12-179 enclose the MPN domain; that stretch reads VHLESDAFLV…YTCFQSIQAQ (168 aa). Zn(2+) is bound by residues histidine 122, histidine 124, and aspartate 135. Positions 122–135 match the JAMM motif motif; that stretch reads HSHPHITVWPSHVD. Position 189 is a phosphoserine (serine 189).

This sequence belongs to the peptidase M67A family. BRCC36 subfamily. In terms of assembly, component of the ARISC complex, at least composed of UIMC1/RAP80, ABRAXAS1, BRCC3/BRCC36, BABAM2 and BABAM1/NBA1. Component of the BRCA1-A complex, at least composed of BRCA1, BARD1, UIMC1/RAP80, ABRAXAS1, BRCC3/BRCC36, BABAM2 and BABAM1/NBA1. In the BRCA1-A complex, interacts directly with ABRAXAS1 and BABAM2. Component of the BRISC complex, at least composed of ABRAXAS2, BRCC3/BRCC36, BABAM2 and BABAM1/NBA1. Identified in a complex with SHMT2 and the other subunits of the BRISC complex. In the BRISC complex, interacts directly with ABRAXAS2. Identified in a complex with ABRAXAS2 and NUMA1. The BRISC complex interacts with the CSN complex. Component of the BRCA1/BRCA2 containing complex (BRCC), which also contains BRCA1, BRCA2, BARD1, BABAM2 and RAD51. BRCC is a ubiquitin E3 ligase complex that enhances cellular survival following DNA damage. Interacts with BRCA1. Binds polyubiquitin. Interacts with PWWP2B. Interacts with HDAC1; this interaction is enhanced in the presence of PWWP2B. Requires Zn(2+) as cofactor.

It is found in the nucleus. Its subcellular location is the cytoplasm. It localises to the cytoskeleton. The protein resides in the spindle pole. Its function is as follows. Metalloprotease that specifically cleaves 'Lys-63'-linked polyubiquitin chains. Does not have activity toward 'Lys-48'-linked polyubiquitin chains. Component of the BRCA1-A complex, a complex that specifically recognizes 'Lys-63'-linked ubiquitinated histones H2A and H2AX at DNA lesions sites, leading to target the BRCA1-BARD1 heterodimer to sites of DNA damage at double-strand breaks (DSBs). In the BRCA1-A complex, it specifically removes 'Lys-63'-linked ubiquitin on histones H2A and H2AX, antagonizing the RNF8-dependent ubiquitination at double-strand breaks (DSBs). Catalytic subunit of the BRISC complex, a multiprotein complex that specifically cleaves 'Lys-63'-linked ubiquitin in various substrates. Mediates the specific 'Lys-63'-specific deubiquitination associated with the COP9 signalosome complex (CSN), via the interaction of the BRISC complex with the CSN complex. The BRISC complex is required for normal mitotic spindle assembly and microtubule attachment to kinetochores via its role in deubiquitinating NUMA1. Plays a role in interferon signaling via its role in the deubiquitination of the interferon receptor IFNAR1; deubiquitination increases IFNAR1 activity by enhancing its stability and cell surface expression. Acts as a regulator of the NLRP3 inflammasome by mediating deubiquitination of NLRP3, leading to NLRP3 inflammasome assembly. Down-regulates the response to bacterial lipopolysaccharide (LPS) via its role in IFNAR1 deubiquitination. Deubiquitinates HDAC1 and PWWP2B leading to their stabilization. The protein is Lys-63-specific deubiquitinase BRCC36 (BRCC3) of Pongo abelii (Sumatran orangutan).